Here is a 429-residue protein sequence, read N- to C-terminus: Histidinol dehydrogenase (429 aa).

NAD(+) is bound by residues Tyr-127, Gln-188, and Asn-211. Ser-234, Gln-256, and His-259 together coordinate substrate. The Zn(2+) site is built by Gln-256 and His-259. Active-site proton acceptor residues include Glu-324 and His-325. The substrate site is built by His-325, Asp-358, Glu-412, and His-417. A Zn(2+)-binding site is contributed by Asp-358. His-417 lines the Zn(2+) pocket.

It belongs to the histidinol dehydrogenase family. It depends on Zn(2+) as a cofactor.

The catalysed reaction is L-histidinol + 2 NAD(+) + H2O = L-histidine + 2 NADH + 3 H(+). It functions in the pathway amino-acid biosynthesis; L-histidine biosynthesis; L-histidine from 5-phospho-alpha-D-ribose 1-diphosphate: step 9/9. In terms of biological role, catalyzes the sequential NAD-dependent oxidations of L-histidinol to L-histidinaldehyde and then to L-histidine. The chain is Histidinol dehydrogenase from Bacillus anthracis.